Consider the following 148-residue polypeptide: MNKPARQLRIREIIQQEHVENQHDLLRLLKEKGVKVAQATLSRDCAELGIIRSKTHAGYRLLFAEEHSGRIIKGLVGMEVVSVAANETSVIVRTLPGRAHGVGSWLDQFHSPLILGTIAGDDTVLVIPDSVENISALISYIHKNLSTN.

It belongs to the ArgR family.

It is found in the cytoplasm. It participates in amino-acid biosynthesis; L-arginine biosynthesis [regulation]. Functionally, regulates arginine biosynthesis genes. This chain is Arginine repressor, found in Chlorobium phaeovibrioides (strain DSM 265 / 1930) (Prosthecochloris vibrioformis (strain DSM 265)).